The primary structure comprises 1021 residues: Ubiquitin-activating enzyme E1 1 (1021 aa).

Arginine 22, alanine 442, and aspartate 468 together coordinate ATP. Aspartate 470 provides a ligand contact to Mg(2+). ATP-binding positions include arginine 479, lysine 492, valine 518, and 542–543 (DN). Aspartate 542 is a binding site for Mg(2+). Cysteine 598 serves as the catalytic Glycyl thioester intermediate.

This sequence belongs to the ubiquitin-activating E1 family. In terms of assembly, monomer.

It localises to the cytoplasm. The protein resides in the nucleus. It catalyses the reaction ATP + ubiquitin + [E1 ubiquitin-activating enzyme]-L-cysteine = AMP + diphosphate + S-ubiquitinyl-[E1 ubiquitin-activating enzyme]-L-cysteine.. Its pathway is protein modification; protein ubiquitination. In terms of biological role, E1 ubiquitin-activating enzyme that catalyzes the first step in ubiquitin conjugation to mark cellular proteins for degradation through the ubiquitin-proteasome system. Activates ubiquitin by first adenylating its C-terminal glycine residue with ATP, and thereafter linking this residue to the side chain of a cysteine residue in E1, yielding a ubiquitin-E1 thioester and free AMP. This is Ubiquitin-activating enzyme E1 1 (UBA1) from Candida albicans (strain WO-1) (Yeast).